The sequence spans 361 residues: AP2/ERF and B3 domain-containing transcription repressor TEM1 (361 aa).

The tract at residues 1–73 (MEYSCVDDSS…SRKLPSSKYK (73 aa)) is disordered. Residues 9 to 27 (SSTTSESLSISTTPKPTTT) are compositionally biased toward low complexity. A DNA-binding region (AP2/ERF) is located at residues 71–126 (KYKGVVPQPNGRWGAQIYEKHQRVWLGTFNEEEEAASSYDIAVRRFRGRDAVTNFK). Residues 195–306 (FEKTVTPSDV…QLYIHWKVRS (112 aa)) constitute a DNA-binding region (TF-B3).

This sequence belongs to the AP2/ERF transcription factor family. RAV subfamily. Interacts with FT. As to expression, expressed in leaves.

It is found in the nucleus. Transcriptional repressor of flowering time on long day plants. Acts directly on FT expression by binding 5'-CAACA-3' and 5'-CACCTG-3 sequences. Functionally redundant with TEM2. The protein is AP2/ERF and B3 domain-containing transcription repressor TEM1 (TEM1) of Arabidopsis thaliana (Mouse-ear cress).